Consider the following 336-residue polypeptide: Prenytransferase ascA (336 aa).

The interval 1-26 (MAAKSRSPKRGTSEKTPLVEKEAPYQ) is disordered. Basic and acidic residues predominate over residues 11-23 (GTSEKTPLVEKEA). The next 8 membrane-spanning stretches (helical) occupy residues 52–72 (PHGN…ASAI), 74–94 (PTEL…TFLM), 131–151 (GHVF…SLPI), 179–199 (VILG…VGLP), 206–226 (FVPT…YDVV), 251–271 (LEGL…TLGY), 272–292 (LVGM…FGLV), and 314–334 (FAIL…DYVV).

The protein belongs to the UbiA prenyltransferase family. The cofactor is Mg(2+).

Its subcellular location is the membrane. It carries out the reaction orsellinate + (2E,6E)-farnesyl diphosphate = ilicicolinate B + diphosphate. Its pathway is secondary metabolite biosynthesis; terpenoid biosynthesis. Prenytransferase; part of the asc-1 gene cluster that mediates the biosynthesis of both ascochlorin and ascofuranone, a strong inhibitor of cyanide-insensitive alternative oxidases and a promising drug candidate against African trypanosomiasis. The first step in the pathway is performed by the non-reducing polyketide synthase ascC that produces orsellinic acid by condensing acetyl-CoA with 3 malonyl-CoA units. Orsellinic acid is then prenylated by the prenyltransferase ascA to yield ilicicolinic acid B. Ilicicolinic acid B is further reduced to ilicicolin B by the reductase ascB. The halogenase ascD then chlorinates ilicicolin B to produce ilicicolin A which is converted to ilicicolin A epoxide by the cytochrome P450 monooxygenase ascE that catalyzes stereoselective epoxidation of the terminal double bond of the prenyl group. Ilicicolin A epoxide is the last common precursor for the biosynthesis of ascofuranone and ascochlorin. The terpene cyclase ascF produces a monocyclic terpene, and the cyclization reaction is proposed to be initiated by protonation of the terminal epoxide of ilicicolin A epoxide to generate a monocyclic tertiarycation, which is followed by a series of hydride and methyl shifts with abstraction of proton, leading to the formation of the (14S,15R,19R)-trimethylcyclohexanone ring structure of ilicicolin C, which is finally reduced to ascochlorin by the dehydrogenase ascG. On the other hand, ilicicolin A epoxide is hydroxylated by the cytochrome P450 monooxygenase ascH, and the resultant product is cyclized by the terpene cyclase ascI to ascofuranol via protonation-initiated epoxide ring opening, which facilitates the 6-endo-tet cyclization to form the tetrahy-drofuran ring. Finally, ascofuranol is oxidized into ascofuranone by ascJ. This is Prenytransferase ascA from Acremonium egyptiacum (Oospora egyptiaca).